The chain runs to 424 residues: L-rhamnose isomerase (424 aa).

Mn(2+) contacts are provided by His-261, Asp-293, and Asp-295.

The protein belongs to the rhamnose isomerase family. It depends on Mn(2+) as a cofactor.

The protein localises to the cytoplasm. It carries out the reaction L-rhamnopyranose = L-rhamnulose. It participates in carbohydrate degradation; L-rhamnose degradation; glycerone phosphate from L-rhamnose: step 1/3. In terms of biological role, catalyzes the interconversion of L-rhamnose and L-rhamnulose. The protein is L-rhamnose isomerase of Bacillus subtilis (strain 168).